The primary structure comprises 36 residues: Phosphoglycerate kinase, chloroplastic (36 aa).

Positions 22, 23, and 25 each coordinate (2R)-3-phosphoglycerate.

Belongs to the phosphoglycerate kinase family. Monomer. Mg(2+) serves as cofactor.

The protein resides in the plastid. It is found in the chloroplast. It catalyses the reaction (2R)-3-phosphoglycerate + ATP = (2R)-3-phospho-glyceroyl phosphate + ADP. It functions in the pathway carbohydrate biosynthesis; Calvin cycle. The protein is Phosphoglycerate kinase, chloroplastic of Scenedesmus fuscus (Green alga).